A 449-amino-acid polypeptide reads, in one-letter code: C4-dicarboxylate transport protein 1 (449 aa).

Helical transmembrane passes span 14–34, 47–67, 83–103, 157–177, 195–215, 226–246, 312–332, 359–379, and 385–405; these read SIFL…VGIP, FIKL…VNGI, SVIY…VVAY, ILQV…VGEQ, IMGM…AFTT, LGAL…AVLG, FSIY…TPLA, VILA…LVLV, and FMGI…TVTI.

This sequence belongs to the dicarboxylate/amino acid:cation symporter (DAACS) (TC 2.A.23) family.

Its subcellular location is the cell inner membrane. Functionally, responsible for the transport of dicarboxylates such as succinate, fumarate, and malate from the periplasm across the membrane. The sequence is that of C4-dicarboxylate transport protein 1 from Pseudomonas aeruginosa (strain UCBPP-PA14).